A 287-amino-acid chain; its full sequence is Cysteine-rich repeat secretory protein 59 (287 aa).

The signal sequence occupies residues 1–26; it reads METTKKLSPIFCFSSLLCLFFTMNQA. 2 Gnk2-homologous domains span residues 32 to 134 and 140 to 250; these read HMDT…DKFF and KKPN…ITTS. N-linked (GlcNAc...) asparagine glycans are attached at residues Asn43, Asn47, Asn63, Asn72, Asn93, Asn103, Asn111, and Asn212.

It belongs to the cysteine-rich repeat secretory protein family.

It is found in the secreted. The sequence is that of Cysteine-rich repeat secretory protein 59 (CRRSP59) from Arabidopsis thaliana (Mouse-ear cress).